The following is a 545-amino-acid chain: CTP synthase (545 aa).

The segment at 1–266 (MTTRYIFVTG…DDLVIKRFNL (266 aa)) is amidoligase domain. Residue serine 14 participates in CTP binding. Serine 14 contacts UTP. Residues 15–20 (SLGKGI) and aspartate 72 each bind ATP. Positions 72 and 140 each coordinate Mg(2+). Residues 147–149 (DIE), 187–192 (KTKPTQ), and lysine 223 contribute to the CTP site. Residues 187-192 (KTKPTQ) and lysine 223 each bind UTP. Residue 239 to 241 (KDV) participates in ATP binding. Positions 291–542 (TIGMVGKYIE…IAASYAYQKR (252 aa)) constitute a Glutamine amidotransferase type-1 domain. Glycine 352 is an L-glutamine binding site. The active-site Nucleophile; for glutamine hydrolysis is the cysteine 379. L-glutamine contacts are provided by residues 380–383 (LGMQ), glutamate 403, and arginine 470. Active-site residues include histidine 515 and glutamate 517.

The protein belongs to the CTP synthase family. As to quaternary structure, homotetramer.

The catalysed reaction is UTP + L-glutamine + ATP + H2O = CTP + L-glutamate + ADP + phosphate + 2 H(+). It catalyses the reaction L-glutamine + H2O = L-glutamate + NH4(+). The enzyme catalyses UTP + NH4(+) + ATP = CTP + ADP + phosphate + 2 H(+). It functions in the pathway pyrimidine metabolism; CTP biosynthesis via de novo pathway; CTP from UDP: step 2/2. Allosterically activated by GTP, when glutamine is the substrate; GTP has no effect on the reaction when ammonia is the substrate. The allosteric effector GTP functions by stabilizing the protein conformation that binds the tetrahedral intermediate(s) formed during glutamine hydrolysis. Inhibited by the product CTP, via allosteric rather than competitive inhibition. Catalyzes the ATP-dependent amination of UTP to CTP with either L-glutamine or ammonia as the source of nitrogen. Regulates intracellular CTP levels through interactions with the four ribonucleotide triphosphates. The polypeptide is CTP synthase (Shewanella frigidimarina (strain NCIMB 400)).